The primary structure comprises 362 residues: Dihydroorotate dehydrogenase (quinone) (362 aa).

Residues 62–66 (AGYDK) and threonine 86 each bind FMN. Lysine 66 is a binding site for substrate. 111–115 (NRLGF) contributes to the substrate binding site. Positions 139 and 170 each coordinate FMN. Asparagine 170 is a substrate binding site. Catalysis depends on serine 173, which acts as the Nucleophile. Asparagine 175 serves as a coordination point for substrate. FMN is bound by residues lysine 215 and serine 243. 244-245 (NT) is a substrate binding site. Residues glycine 266, glycine 295, and 316 to 317 (YS) each bind FMN.

It belongs to the dihydroorotate dehydrogenase family. Type 2 subfamily. As to quaternary structure, monomer. FMN serves as cofactor.

The protein resides in the cell membrane. It catalyses the reaction (S)-dihydroorotate + a quinone = orotate + a quinol. It participates in pyrimidine metabolism; UMP biosynthesis via de novo pathway; orotate from (S)-dihydroorotate (quinone route): step 1/1. In terms of biological role, catalyzes the conversion of dihydroorotate to orotate with quinone as electron acceptor. This Rhizobium etli (strain ATCC 51251 / DSM 11541 / JCM 21823 / NBRC 15573 / CFN 42) protein is Dihydroorotate dehydrogenase (quinone).